The following is a 499-amino-acid chain: UDP-N-acetylmuramoyl-L-alanyl-D-glutamate--2,6-diaminopimelate ligase (499 aa).

Ser-32 is a binding site for UDP-N-acetyl-alpha-D-muramoyl-L-alanyl-D-glutamate. Position 117–123 (Gly-117–Thr-123) interacts with ATP. Residues Thr-159–Thr-160, Ser-186, Gln-192, and Arg-194 contribute to the UDP-N-acetyl-alpha-D-muramoyl-L-alanyl-D-glutamate site. Lys-226 bears the N6-carboxylysine mark. Meso-2,6-diaminopimelate is bound by residues Arg-394, Asp-418–Arg-421, Gly-469, and Glu-473. Residues Asp-418–Arg-421 carry the Meso-diaminopimelate recognition motif motif.

Belongs to the MurCDEF family. MurE subfamily. It depends on Mg(2+) as a cofactor. In terms of processing, carboxylation is probably crucial for Mg(2+) binding and, consequently, for the gamma-phosphate positioning of ATP.

Its subcellular location is the cytoplasm. It catalyses the reaction UDP-N-acetyl-alpha-D-muramoyl-L-alanyl-D-glutamate + meso-2,6-diaminopimelate + ATP = UDP-N-acetyl-alpha-D-muramoyl-L-alanyl-gamma-D-glutamyl-meso-2,6-diaminopimelate + ADP + phosphate + H(+). Its pathway is cell wall biogenesis; peptidoglycan biosynthesis. Functionally, catalyzes the addition of meso-diaminopimelic acid to the nucleotide precursor UDP-N-acetylmuramoyl-L-alanyl-D-glutamate (UMAG) in the biosynthesis of bacterial cell-wall peptidoglycan. The polypeptide is UDP-N-acetylmuramoyl-L-alanyl-D-glutamate--2,6-diaminopimelate ligase (Synechococcus sp. (strain WH7803)).